A 257-amino-acid chain; its full sequence is MRILLTNDDGIHAEGLAALERIARTLSDDVWIVAPETDQSGLAHSLSLSEPLRLRKISDKHFALRGTPTDCVIMGIRQVMDIKPDLVLSGVNSGSNVADDVTYSGTIAGAIEGTMQGVRSFALSQAYLYEDGARIVPWEVCETHAPALLEKLMVLDLPEGTFLNLNFPNCRPGEVDGAEVTMQGKLAFNLQVDARSDGRGFPYYWLKFGERAGAFIEGTDIHALKHNKISVTPLKLDLTDYSVTDRVARALGYGAQV.

4 residues coordinate a divalent metal cation: Asp-8, Asp-9, Ser-40, and Asn-92.

The protein belongs to the SurE nucleotidase family. Requires a divalent metal cation as cofactor.

Its subcellular location is the cytoplasm. The enzyme catalyses a ribonucleoside 5'-phosphate + H2O = a ribonucleoside + phosphate. In terms of biological role, nucleotidase that shows phosphatase activity on nucleoside 5'-monophosphates. In Rhizobium leguminosarum bv. trifolii (strain WSM2304), this protein is 5'-nucleotidase SurE.